A 277-amino-acid chain; its full sequence is Undecaprenyl-diphosphatase (277 aa).

8 helical membrane-spanning segments follow: residues 11 to 31, 47 to 67, 96 to 116, 123 to 143, 153 to 173, 197 to 217, 227 to 247, and 254 to 274; these read WWQA…PISS, AGAS…LIYF, VGIL…KAIW, LWVI…AEQT, LGIW…IPGV, SFLL…ISEF, LGTL…IQFL, and LFIV…ALGF.

Belongs to the UppP family.

Its subcellular location is the cell inner membrane. The catalysed reaction is di-trans,octa-cis-undecaprenyl diphosphate + H2O = di-trans,octa-cis-undecaprenyl phosphate + phosphate + H(+). Its function is as follows. Catalyzes the dephosphorylation of undecaprenyl diphosphate (UPP). Confers resistance to bacitracin. This is Undecaprenyl-diphosphatase from Synechococcus sp. (strain JA-2-3B'a(2-13)) (Cyanobacteria bacterium Yellowstone B-Prime).